The chain runs to 385 residues: Putative cell agglutination protein pfl8 (385 aa).

The signal sequence occupies residues 1–20 (MNSYISLIFTLLFFTSAARS). Residues 41-90 (SSEFTSTITPETPSSSSSTFVPISTHTSSATNTTSGQLSISSSSSTSSEY) are disordered. N-linked (GlcNAc...) asparagine glycosylation is found at N72, N270, and N346. In terms of domain architecture, PA14 spans 196-360 (EVSTFNKPAY…GPVRTTSYSY (165 aa)).

Its subcellular location is the secreted. It localises to the cell surface. Its function is as follows. May be involved in agglutination during conjugation or other aspects of colony formation. Induces flocculation when overexpressed. The chain is Putative cell agglutination protein pfl8 from Schizosaccharomyces pombe (strain 972 / ATCC 24843) (Fission yeast).